Here is a 444-residue protein sequence, read N- to C-terminus: N-succinylarginine dihydrolase (444 aa).

Substrate contacts are provided by residues 19–28 (AGLSFGNVAS), N110, and 137–138 (HR). The active site involves E174. R214 is a binding site for substrate. Residue H250 is part of the active site. D252 and N362 together coordinate substrate. The active-site Nucleophile is the C368.

It belongs to the succinylarginine dihydrolase family. In terms of assembly, homodimer.

It catalyses the reaction N(2)-succinyl-L-arginine + 2 H2O + 2 H(+) = N(2)-succinyl-L-ornithine + 2 NH4(+) + CO2. It functions in the pathway amino-acid degradation; L-arginine degradation via AST pathway; L-glutamate and succinate from L-arginine: step 2/5. Functionally, catalyzes the hydrolysis of N(2)-succinylarginine into N(2)-succinylornithine, ammonia and CO(2). The sequence is that of N-succinylarginine dihydrolase from Shewanella baltica (strain OS155 / ATCC BAA-1091).